The sequence spans 145 residues: 3-hydroxyacyl-[acyl-carrier-protein] dehydratase FabZ (145 aa).

His48 is a catalytic residue.

It belongs to the thioester dehydratase family. FabZ subfamily.

The protein resides in the cytoplasm. It carries out the reaction a (3R)-hydroxyacyl-[ACP] = a (2E)-enoyl-[ACP] + H2O. In terms of biological role, involved in unsaturated fatty acids biosynthesis. Catalyzes the dehydration of short chain beta-hydroxyacyl-ACPs and long chain saturated and unsaturated beta-hydroxyacyl-ACPs. The sequence is that of 3-hydroxyacyl-[acyl-carrier-protein] dehydratase FabZ from Geobacillus sp. (strain WCH70).